The primary structure comprises 325 residues: MKTFSSFLQIGRNMHQGNQTTITEFILLGFFKQDEHQNLLFVLFLGMYLVTVIGNGLIIVAISLDTYLHTPMYLFLANLSFADISSISNSVPKMLVNIQTKSQSISYESCITQMYFSIVFVVIDNLLLGTMAYDHFVAICHPLNYTILMRPRFGILLTVISWFLSNIIALTHTLLLIQLLFCNHNTLPHFFCDLAPLLKLSCSDTLINELVLFIVGLSVIIFPFTLSFFSYVCIIRAVLRVSSTQGKWKAFSTCGSHLTVVLLFYGTIVGVYFFPSSTHPEDTDKIGAVLFTVVTPMINPFIYSLRNKDMKGALRKLINRKISSL.

Over 1–38 the chain is Extracellular; sequence MKTFSSFLQIGRNMHQGNQTTITEFILLGFFKQDEHQN. Asparagine 18 carries N-linked (GlcNAc...) asparagine glycosylation. The chain crosses the membrane as a helical span at residues 39–62; sequence LLFVLFLGMYLVTVIGNGLIIVAI. Topologically, residues 63–70 are cytoplasmic; the sequence is SLDTYLHT. A helical membrane pass occupies residues 71 to 92; it reads PMYLFLANLSFADISSISNSVP. The Extracellular segment spans residues 93–113; the sequence is KMLVNIQTKSQSISYESCITQ. Cysteine 110 and cysteine 202 are oxidised to a cystine. A helical membrane pass occupies residues 114–133; sequence MYFSIVFVVIDNLLLGTMAY. Topologically, residues 134-152 are cytoplasmic; it reads DHFVAICHPLNYTILMRPR. Residues 153-171 traverse the membrane as a helical segment; the sequence is FGILLTVISWFLSNIIALT. Topologically, residues 172–208 are extracellular; sequence HTLLLIQLLFCNHNTLPHFFCDLAPLLKLSCSDTLIN. Residues 209-232 traverse the membrane as a helical segment; the sequence is ELVLFIVGLSVIIFPFTLSFFSYV. Topologically, residues 233-249 are cytoplasmic; sequence CIIRAVLRVSSTQGKWK. The chain crosses the membrane as a helical span at residues 250 to 272; sequence AFSTCGSHLTVVLLFYGTIVGVY. Topologically, residues 273–285 are extracellular; the sequence is FFPSSTHPEDTDK. Residues 286–305 traverse the membrane as a helical segment; sequence IGAVLFTVVTPMINPFIYSL. The Cytoplasmic segment spans residues 306–325; that stretch reads RNKDMKGALRKLINRKISSL.

Belongs to the G-protein coupled receptor 1 family.

The protein resides in the cell membrane. Odorant receptor. The protein is Olfactory receptor 1S1 (OR1S1) of Homo sapiens (Human).